Reading from the N-terminus, the 119-residue chain is BLOC-1-related complex subunit 8 (119 aa).

Residue serine 109 is modified to Phosphoserine.

Belongs to the BORCS8 family. Component of the BLOC-one-related complex (BORC) which is composed of BLOC1S1, BLOC1S2, BORCS5, BORCS6, BORCS7, BORCS8, KXD1 and SNAPIN.

The protein resides in the lysosome membrane. In terms of biological role, as part of the BLOC-one-related complex (BORC), it plays a role in the movement and localization of lysosomes at the cell periphery. Associated with the cytosolic face of lysosomes, BORC recruits ARL8B to the lysosomal membrane and couples lysosomes to microtubule plus-end-directed kinesin motors, driving lysosome movement toward the cell periphery. The protein is BLOC-1-related complex subunit 8 of Homo sapiens (Human).